Reading from the N-terminus, the 433-residue chain is 23S rRNA (uracil(1939)-C(5))-methyltransferase RlmD (433 aa).

Residues 10–68 (RTTTRQIITVSVNDLDSFGQGVARHNGKTLFIPGLLPQENAEVAVTEDKKQYARAKVVR) form the TRAM domain. [4Fe-4S] cluster-binding residues include Cys-81, Cys-87, Cys-90, and Cys-162. S-adenosyl-L-methionine is bound by residues Gln-265, Phe-294, Asn-299, Glu-315, Asn-342, and Asp-363. The active-site Nucleophile is Cys-389.

Belongs to the class I-like SAM-binding methyltransferase superfamily. RNA M5U methyltransferase family. RlmD subfamily.

The catalysed reaction is uridine(1939) in 23S rRNA + S-adenosyl-L-methionine = 5-methyluridine(1939) in 23S rRNA + S-adenosyl-L-homocysteine + H(+). Its function is as follows. Catalyzes the formation of 5-methyl-uridine at position 1939 (m5U1939) in 23S rRNA. In Shigella flexneri serotype 5b (strain 8401), this protein is 23S rRNA (uracil(1939)-C(5))-methyltransferase RlmD.